A 397-amino-acid chain; its full sequence is P-selectin glycoprotein ligand 1 (397 aa).

Residues 1–17 form the signal peptide; that stretch reads MSPSFLVLLTILGPGNS. Positions 18–41 are excised as a propeptide; the sequence is LQLQDPWGHETKEAPGPVHLRERR. Residues 18–307 lie on the Extracellular side of the membrane; the sequence is LQLQDPWGHE…SSDLIPVKQC (290 aa). The residue at position 54 (Y54) is a Sulfotyrosine. A glycan (O-linked (GalNAc...) threonine) is linked at T58. A glycan (N-linked (GlcNAc...) asparagine) is linked at N66. Residues 89 to 261 form a disordered region; it reads TSAGTSERAT…TMETASTESN (173 aa). A compositionally biased stretch (polar residues) spans 120–198; that stretch reads STDSATQWSL…PMEAETSQPA (79 aa). 10 repeat units span residues 126–135, 136–145, 146–155, 156–165, 166–175, 176–185, 186–195, 196–205, 206–215, and 216–225. Residues 126–225 are 10 X 10 AA tandem repeats; it reads QWSLTSVETV…KPAPTEAETT (100 aa). The span at 236–261 shows a compositional bias: polar residues; it reads LFTTSAATEVPSTEPTTMETASTESN. N-linked (GlcNAc...) asparagine glycosylation is present at N261. Residues 308–328 traverse the membrane as a helical segment; it reads LLIILILASLATIFLVCTVVL. Over 329–397 the chain is Cytoplasmic; it reads AVRLSRKTHM…DDLTLHSFLP (69 aa). Residues 364-390 form a disordered region; sequence PVTANGGLPKVQDLKTEPSGDRDGDDL. A compositionally biased stretch (basic and acidic residues) spans 375–390; sequence QDLKTEPSGDRDGDDL. Phosphothreonine is present on T391. S394 bears the Phosphoserine mark.

Homodimer; disulfide-linked. Interacts with P- and E-selectins, through their lectin/EGF domains. Interaction with P-selectin requires sialyl Lewis X glycan modification and tyrosine sulfation, probably on Tyr-54, for high affinity binding. Dimerization appears not to be required for P-selectin/SELP binding. Interacts with SNX20. Interacts with MSN and SYK; mediates SYK activation downstream of SELPLG. Interacts with HAVCR1. Post-translationally, displays complex, core-2, sialylated and fucosylated O-linked oligosaccharides, at least some of which appear to contain poly-N-acetyllactosamine with varying degrees of substitution. Mainly disialylated or neutral forms of the core-2 tetrasaccharide, Galbeta1--&gt;4GlcNAcbeta1--&gt;6(Galbeta1--&gt;3)GalNAcOH. The GlcN:GalN ratio is approximately 2:1 and the Man:Fuc ratio 3:5. Contains about 14% fucose with alpha-1,3 linkage present in two forms: One species is a disialylated, monofucosylated glycan, and the other, a monosialylated, trifucosylated glycan with a polylactosamine backbone. The fucosylated forms carry the Lewis antigen and are important for interaction with selectins and for functioning. No sulfated O-glycans. Some N-glycosylation. In terms of tissue distribution, highly expressed in blood, bone marrow, brain, adipose tissue, spleen, and thymus. Also expressed in heart, kidney, liver, muscle, ovary, and stomach.

The protein localises to the cell membrane. In terms of biological role, a SLe(x)-type proteoglycan, which through high affinity, calcium-dependent interactions with E- and P-selectins, mediates rapid rolling of leukocytes over vascular surfaces during the initial steps in inflammation. Critical for the initial leukocyte capture. This Mus musculus (Mouse) protein is P-selectin glycoprotein ligand 1 (Selplg).